The following is a 256-amino-acid chain: Pimeloyl-[acyl-carrier protein] methyl ester esterase (256 aa).

The 228-residue stretch at 15 to 242 (HLVLLHGWGL…AAHAPFISHP (228 aa)) folds into the AB hydrolase-1 domain. Substrate is bound by residues Trp-22, 82-83 (SL), and 143-147 (FLALQ). The active-site Nucleophile is Ser-82. Active-site residues include Asp-207 and His-235. His-235 is a substrate binding site.

This sequence belongs to the AB hydrolase superfamily. Carboxylesterase BioH family. As to quaternary structure, monomer.

The protein localises to the cytoplasm. The enzyme catalyses 6-carboxyhexanoyl-[ACP] methyl ester + H2O = 6-carboxyhexanoyl-[ACP] + methanol + H(+). Its pathway is cofactor biosynthesis; biotin biosynthesis. Its function is as follows. The physiological role of BioH is to remove the methyl group introduced by BioC when the pimeloyl moiety is complete. It allows to synthesize pimeloyl-ACP via the fatty acid synthetic pathway through the hydrolysis of the ester bonds of pimeloyl-ACP esters. In Escherichia coli (strain 55989 / EAEC), this protein is Pimeloyl-[acyl-carrier protein] methyl ester esterase.